The chain runs to 93 residues: Acylphosphatase (93 aa).

The Acylphosphatase-like domain maps to 4–91; the sequence is TLHLVIHGRV…PAGTGFRVAA (88 aa). Active-site residues include R19 and N37.

Belongs to the acylphosphatase family.

It carries out the reaction an acyl phosphate + H2O = a carboxylate + phosphate + H(+). This is Acylphosphatase (acyP) from Azorhizobium caulinodans (strain ATCC 43989 / DSM 5975 / JCM 20966 / LMG 6465 / NBRC 14845 / NCIMB 13405 / ORS 571).